The chain runs to 127 residues: Aspartate 1-decarboxylase (127 aa).

Residue serine 25 is the Schiff-base intermediate with substrate; via pyruvic acid of the active site. Serine 25 carries the post-translational modification Pyruvic acid (Ser). Residue threonine 57 coordinates substrate. The Proton donor role is filled by tyrosine 58. 73–75 (GSA) is a binding site for substrate.

The protein belongs to the PanD family. As to quaternary structure, heterooctamer of four alpha and four beta subunits. Requires pyruvate as cofactor. Is synthesized initially as an inactive proenzyme, which is activated by self-cleavage at a specific serine bond to produce a beta-subunit with a hydroxyl group at its C-terminus and an alpha-subunit with a pyruvoyl group at its N-terminus.

The protein localises to the cytoplasm. It carries out the reaction L-aspartate + H(+) = beta-alanine + CO2. It functions in the pathway cofactor biosynthesis; (R)-pantothenate biosynthesis; beta-alanine from L-aspartate: step 1/1. Its function is as follows. Catalyzes the pyruvoyl-dependent decarboxylation of aspartate to produce beta-alanine. In Dechloromonas aromatica (strain RCB), this protein is Aspartate 1-decarboxylase.